The chain runs to 81 residues: CLAVATA3/ESR (CLE)-related protein 6 (81 aa).

The N-terminal stretch at 1-26 is a signal peptide; sequence MANLILKQSLIILLIIYSTPILSSQA. Hydroxyproline is present on residues Pro73 and Pro76. Pro76 carries an O-linked (Ara...) hydroxyproline glycan.

This sequence belongs to the CLV3/ESR signal peptide family. Post-translationally, the O-glycosylation (arabinosylation) of the hydroxyproline Pro-76 enhances binding affinity of the CLE6p peptide for its receptor. In terms of tissue distribution, mostly expressed in roots, seedlings, stems and flowers, and, to a lower extent, in apex and siliques.

It is found in the secreted. Its subcellular location is the extracellular space. Its function is as follows. Extracellular signal peptide that regulates cell fate. The polypeptide is CLAVATA3/ESR (CLE)-related protein 6 (Arabidopsis thaliana (Mouse-ear cress)).